A 147-amino-acid polypeptide reads, in one-letter code: Large ribosomal subunit protein uL15 (147 aa).

Positions 1-54 (MKLFELQPAPGSKKLPNRKGRGIGSGNGKTGGRGHKGQNARAGGGVRPGFEGGQ) are disordered. Gly residues-rich tracts occupy residues 22–31 (GIGSGNGKTG) and 42–52 (AGGGVRPGFEG).

This sequence belongs to the universal ribosomal protein uL15 family. As to quaternary structure, part of the 50S ribosomal subunit.

In terms of biological role, binds to the 23S rRNA. The chain is Large ribosomal subunit protein uL15 from Ruminiclostridium cellulolyticum (strain ATCC 35319 / DSM 5812 / JCM 6584 / H10) (Clostridium cellulolyticum).